The following is a 159-amino-acid chain: Capsid protein (159 aa).

It belongs to the virgaviridae capsid protein family.

The protein resides in the virion. In terms of biological role, capsid protein self-assembles to form rod-shaped virions about 18 nm in diameter with a central canal enclosing the viral genomic RNA. In Tomato mosaic virus (strain Kazakh K1) (ToMV), this protein is Capsid protein (CP).